A 300-amino-acid polypeptide reads, in one-letter code: Phospholipase A1 (300 aa).

A disulfide bond links Cys4 and Cys87. The Nucleophile role is filled by Ser137. The active-site Charge relay system is Asp165. 2 cysteine pairs are disulfide-bonded: Cys176/Cys181 and Cys218/Cys227. His229 functions as the Charge relay system in the catalytic mechanism. 3 disulfide bridges follow: Cys244/Cys268, Cys245/Cys293, and Cys261/Cys266.

Belongs to the AB hydrolase superfamily. Lipase family. In terms of tissue distribution, expressed by the venom gland.

Its subcellular location is the secreted. The enzyme catalyses a 1,2-diacyl-sn-glycero-3-phosphocholine + H2O = a 2-acyl-sn-glycero-3-phosphocholine + a fatty acid + H(+). With respect to regulation, local inflammatory effects are inhibited by antiserotonin drugs (cyproheptadine and methysergide), indomethacin, betamethasone, and antihistamine (chlorpheniramine). In terms of biological role, catalyzes the hydrolysis of phosphatidylcholine with phospholipase A1 activity. Shows potent hemolytic activity that is responsible for its lethal effect. May act as an allergen. In vivo, induces local inflammatory effects. This Vespa basalis (Hornet) protein is Phospholipase A1.